The chain runs to 239 residues: Large ribosomal subunit protein uL2 (239 aa).

2 disordered regions span residues 1 to 28 (MGKRILPQRMGRGTPTFRSPSHRRVGPA) and 199 to 239 (SHPH…RRKG). Positions 225–239 (KVGHIAARRTGRRKG) are enriched in basic residues.

It belongs to the universal ribosomal protein uL2 family. Part of the 50S ribosomal subunit. Forms a bridge to the 30S subunit in the 70S ribosome.

Its function is as follows. One of the primary rRNA binding proteins. Required for association of the 30S and 50S subunits to form the 70S ribosome, for tRNA binding and peptide bond formation. It has been suggested to have peptidyltransferase activity; this is somewhat controversial. Makes several contacts with the 16S rRNA in the 70S ribosome. The protein is Large ribosomal subunit protein uL2 of Staphylothermus marinus (strain ATCC 43588 / DSM 3639 / JCM 9404 / F1).